The sequence spans 248 residues: Type III pantothenate kinase (248 aa).

Residue 6–13 (DCGNSLIK) participates in ATP binding. Substrate contacts are provided by residues Tyr92 and 99-102 (GLDR). Asp101 (proton acceptor) is an active-site residue. Asp121 is a K(+) binding site. Thr124 contributes to the ATP binding site. A substrate-binding site is contributed by Thr180.

The protein belongs to the type III pantothenate kinase family. Homodimer. NH4(+) is required as a cofactor. It depends on K(+) as a cofactor.

It is found in the cytoplasm. It catalyses the reaction (R)-pantothenate + ATP = (R)-4'-phosphopantothenate + ADP + H(+). The protein operates within cofactor biosynthesis; coenzyme A biosynthesis; CoA from (R)-pantothenate: step 1/5. Catalyzes the phosphorylation of pantothenate (Pan), the first step in CoA biosynthesis. This is Type III pantothenate kinase from Pseudomonas aeruginosa (strain LESB58).